The following is a 215-amino-acid chain: MAKPLTERFFIPKEVKVMGRWSVEDVTVEDPSLKPYINLDARILPHSHGRYAKKPFGKANVHIVERLINKVMRSGASHYKAGGHFMRREHRSIMSKKMKAYEVVKEAFMIIERRTKQNPIQVLVKAIENSAPREDTTTIAFGGIRYHMSVDVSPLRRLDIALKNIALGASIKCYRNKTTYAQALAEEIIAAANKDPKSFAYSKKEEIERIAQSSR.

This sequence belongs to the universal ribosomal protein uS7 family. Part of the 30S ribosomal subunit.

Functionally, one of the primary rRNA binding proteins, it binds directly to 16S rRNA where it nucleates assembly of the head domain of the 30S subunit. Is located at the subunit interface close to the decoding center. The protein is Small ribosomal subunit protein uS7 of Thermococcus kodakarensis (strain ATCC BAA-918 / JCM 12380 / KOD1) (Pyrococcus kodakaraensis (strain KOD1)).